A 631-amino-acid polypeptide reads, in one-letter code: Phosphomethylpyrimidine synthase (631 aa).

Substrate is bound by residues asparagine 239, methionine 268, tyrosine 297, histidine 333, 353-355, 394-397, and glutamate 433; these read SRG and DGLR. Histidine 437 is a Zn(2+) binding site. Residue tyrosine 460 participates in substrate binding. Residue histidine 501 participates in Zn(2+) binding. Residues cysteine 581, cysteine 584, and cysteine 589 each contribute to the [4Fe-4S] cluster site.

The protein belongs to the ThiC family. As to quaternary structure, homodimer. [4Fe-4S] cluster serves as cofactor.

It carries out the reaction 5-amino-1-(5-phospho-beta-D-ribosyl)imidazole + S-adenosyl-L-methionine = 4-amino-2-methyl-5-(phosphooxymethyl)pyrimidine + CO + 5'-deoxyadenosine + formate + L-methionine + 3 H(+). Its pathway is cofactor biosynthesis; thiamine diphosphate biosynthesis. Functionally, catalyzes the synthesis of the hydroxymethylpyrimidine phosphate (HMP-P) moiety of thiamine from aminoimidazole ribotide (AIR) in a radical S-adenosyl-L-methionine (SAM)-dependent reaction. The polypeptide is Phosphomethylpyrimidine synthase (Shigella dysenteriae serotype 1 (strain Sd197)).